Consider the following 271-residue polypeptide: Thiazole synthase (271 aa).

The active-site Schiff-base intermediate with DXP is the K104. 1-deoxy-D-xylulose 5-phosphate-binding positions include G165, 192–193, and 214–215; these read AG and NT.

Belongs to the ThiG family. As to quaternary structure, homotetramer. Forms heterodimers with either ThiH or ThiS.

The protein resides in the cytoplasm. The catalysed reaction is [ThiS sulfur-carrier protein]-C-terminal-Gly-aminoethanethioate + 2-iminoacetate + 1-deoxy-D-xylulose 5-phosphate = [ThiS sulfur-carrier protein]-C-terminal Gly-Gly + 2-[(2R,5Z)-2-carboxy-4-methylthiazol-5(2H)-ylidene]ethyl phosphate + 2 H2O + H(+). It functions in the pathway cofactor biosynthesis; thiamine diphosphate biosynthesis. Its function is as follows. Catalyzes the rearrangement of 1-deoxy-D-xylulose 5-phosphate (DXP) to produce the thiazole phosphate moiety of thiamine. Sulfur is provided by the thiocarboxylate moiety of the carrier protein ThiS. In vitro, sulfur can be provided by H(2)S. This chain is Thiazole synthase, found in Burkholderia lata (strain ATCC 17760 / DSM 23089 / LMG 22485 / NCIMB 9086 / R18194 / 383).